We begin with the raw amino-acid sequence, 843 residues long: DNA gyrase subunit A (843 aa).

The Topo IIA-type catalytic domain maps to 61–528 (LPDVRDGLKP…ESSTFNAEDL (468 aa)). Tyr-149 acts as the O-(5'-phospho-DNA)-tyrosine intermediate in catalysis. A GyrA-box motif is present at residues 555–561 (QKRGGKG).

Belongs to the type II topoisomerase GyrA/ParC subunit family. Heterotetramer, composed of two GyrA and two GyrB chains. In the heterotetramer, GyrA contains the active site tyrosine that forms a transient covalent intermediate with DNA, while GyrB binds cofactors and catalyzes ATP hydrolysis.

The protein resides in the cytoplasm. It carries out the reaction ATP-dependent breakage, passage and rejoining of double-stranded DNA.. A type II topoisomerase that negatively supercoils closed circular double-stranded (ds) DNA in an ATP-dependent manner to modulate DNA topology and maintain chromosomes in an underwound state. Negative supercoiling favors strand separation, and DNA replication, transcription, recombination and repair, all of which involve strand separation. Also able to catalyze the interconversion of other topological isomers of dsDNA rings, including catenanes and knotted rings. Type II topoisomerases break and join 2 DNA strands simultaneously in an ATP-dependent manner. This is DNA gyrase subunit A from Leptospira biflexa serovar Patoc (strain Patoc 1 / Ames).